Consider the following 307-residue polypeptide: D-alanine--D-alanine ligase (307 aa).

One can recognise an ATP-grasp domain in the interval 101 to 301 (KTVMRAAGVS…FGELVRWMVE (201 aa)). 127–182 (PLTPPYVVKPIAEGSSMGVIIVRDERSHPPQILASDEWVYGEEVLAETYVAGRELT) contributes to the ATP binding site. Positions 251, 268, and 270 each coordinate Mg(2+).

The protein belongs to the D-alanine--D-alanine ligase family. Mg(2+) is required as a cofactor. The cofactor is Mn(2+).

It localises to the cytoplasm. The catalysed reaction is 2 D-alanine + ATP = D-alanyl-D-alanine + ADP + phosphate + H(+). The protein operates within cell wall biogenesis; peptidoglycan biosynthesis. Cell wall formation. The polypeptide is D-alanine--D-alanine ligase (Methylorubrum extorquens (strain CM4 / NCIMB 13688) (Methylobacterium extorquens)).